The chain runs to 525 residues: D-arabinono-1,4-lactone oxidase (525 aa).

The region spanning 20–195 (IYSSRPEWYF…VGATVRVVPA (176 aa)) is the FAD-binding PCMH-type domain. Pros-8alpha-FAD histidine is present on His-58.

It belongs to the oxygen-dependent FAD-linked oxidoreductase family. FAD is required as a cofactor.

It localises to the mitochondrion membrane. The enzyme catalyses D-arabinono-1,4-lactone + O2 = dehydro-D-arabinono-1,4-lactone + H2O2 + H(+). The protein operates within cofactor biosynthesis; D-erythroascorbate biosynthesis; dehydro-D-arabinono-1,4-lactone from D-arabinose: step 2/2. This chain is D-arabinono-1,4-lactone oxidase (ALO1), found in Candida glabrata (strain ATCC 2001 / BCRC 20586 / JCM 3761 / NBRC 0622 / NRRL Y-65 / CBS 138) (Yeast).